The sequence spans 406 residues: Peptidase T (406 aa).

Position 78 (His-78) interacts with Zn(2+). Asp-80 is a catalytic residue. Residue Asp-139 participates in Zn(2+) binding. Catalysis depends on Glu-173, which acts as the Proton acceptor. Zn(2+) contacts are provided by Glu-174, Asp-196, and His-378.

This sequence belongs to the peptidase M20B family. It depends on Zn(2+) as a cofactor.

Its subcellular location is the cytoplasm. It carries out the reaction Release of the N-terminal residue from a tripeptide.. Its function is as follows. Cleaves the N-terminal amino acid of tripeptides. The protein is Peptidase T of Clostridium perfringens (strain 13 / Type A).